The primary structure comprises 375 residues: Succinyl-diaminopimelate desuccinylase (375 aa).

His66 contributes to the Zn(2+) binding site. The active site involves Asp68. Zn(2+) is bound at residue Asp99. Glu133 acts as the Proton acceptor in catalysis. Zn(2+)-binding residues include Glu134, Glu162, and His348.

Belongs to the peptidase M20A family. DapE subfamily. In terms of assembly, homodimer. It depends on Zn(2+) as a cofactor. Co(2+) is required as a cofactor.

It catalyses the reaction N-succinyl-(2S,6S)-2,6-diaminopimelate + H2O = (2S,6S)-2,6-diaminopimelate + succinate. It participates in amino-acid biosynthesis; L-lysine biosynthesis via DAP pathway; LL-2,6-diaminopimelate from (S)-tetrahydrodipicolinate (succinylase route): step 3/3. Catalyzes the hydrolysis of N-succinyl-L,L-diaminopimelic acid (SDAP), forming succinate and LL-2,6-diaminopimelate (DAP), an intermediate involved in the bacterial biosynthesis of lysine and meso-diaminopimelic acid, an essential component of bacterial cell walls. This chain is Succinyl-diaminopimelate desuccinylase, found in Citrobacter koseri (strain ATCC BAA-895 / CDC 4225-83 / SGSC4696).